Here is a 91-residue protein sequence, read N- to C-terminus: Islet amyloid polypeptide (91 aa).

Residues 1–22 (MCLLQLPVVLLLLSAALNTLKA) form the signal peptide. A propeptide spanning residues 23-34 (TPIASDTDHRVD) is cleaved from the precursor. Cysteines 38 and 43 form a disulfide. Residue tyrosine 73 is modified to Tyrosine amide. Positions 77–91 (NAEVVDVELLHYLPL) are excised as a propeptide.

Belongs to the calcitonin family. In terms of assembly, can form homodimers. Interacts with IDE and INS. Interaction with INS inhibits homodimerization and fibril formation.

It is found in the secreted. Its function is as follows. Amylin/IAPP is a glucoregulatory peptide hormone that plays an important role in the regulation of energy homeostasis. Selectively inhibits insulin-stimulated glucose utilization and glycogen deposition in muscle, while not affecting adipocyte glucose metabolism. IAPP function is mediated by the CALCR-RAMPs (AMYRs) receptor complexes. Amylin can also bind CALCR receptor in the absence of RAMPs, although it is more selective for AMYRs. This is Islet amyloid polypeptide (IAPP) from Octodon degus (Degu).